Reading from the N-terminus, the 342-residue chain is Transmembrane protein 268 (342 aa).

2 consecutive transmembrane segments (helical) span residues 106–126 (AFAV…SQMF) and 133–153 (AGVL…VLVF). The segment at 245–267 (VEGPEDLEDAPLLPSTPGPQERP) is disordered.

As to quaternary structure, interacts with ITGAM; this interaction inhibits ITGAM degradation via the endosome-lysosome pathway. Interacts with ITGB4; this interaction prevents ITGB4 degradation.

The protein localises to the cell membrane. Functionally, stabilizes cell surface expression of ITGAM and participates in the adhesion and migration of phagocytes during bacterial clearance. The chain is Transmembrane protein 268 from Mus musculus (Mouse).